The chain runs to 218 residues: Histidine biosynthesis bifunctional protein HisIE (218 aa).

The interval 1 to 118 is phosphoribosyl-AMP cyclohydrolase; the sequence is MTDLSELNFD…DAPDTGLDGT (118 aa). The segment at 119-218 is phosphoribosyl-ATP pyrophosphohydrolase; that stretch reads LERVYATITE…SGLKGPKEVG (100 aa).

This sequence in the N-terminal section; belongs to the PRA-CH family. In the C-terminal section; belongs to the PRA-PH family.

Its subcellular location is the cytoplasm. It catalyses the reaction 1-(5-phospho-beta-D-ribosyl)-ATP + H2O = 1-(5-phospho-beta-D-ribosyl)-5'-AMP + diphosphate + H(+). It carries out the reaction 1-(5-phospho-beta-D-ribosyl)-5'-AMP + H2O = 1-(5-phospho-beta-D-ribosyl)-5-[(5-phospho-beta-D-ribosylamino)methylideneamino]imidazole-4-carboxamide. The protein operates within amino-acid biosynthesis; L-histidine biosynthesis; L-histidine from 5-phospho-alpha-D-ribose 1-diphosphate: step 2/9. It participates in amino-acid biosynthesis; L-histidine biosynthesis; L-histidine from 5-phospho-alpha-D-ribose 1-diphosphate: step 3/9. The polypeptide is Histidine biosynthesis bifunctional protein HisIE (hisI) (Deinococcus radiodurans (strain ATCC 13939 / DSM 20539 / JCM 16871 / CCUG 27074 / LMG 4051 / NBRC 15346 / NCIMB 9279 / VKM B-1422 / R1)).